A 425-amino-acid polypeptide reads, in one-letter code: UDP-N-acetylglucosamine 1-carboxyvinyltransferase (425 aa).

31–32 (KN) is a phosphoenolpyruvate binding site. Arginine 100 is a UDP-N-acetyl-alpha-D-glucosamine binding site. Cysteine 124 (proton donor) is an active-site residue. Cysteine 124 carries the post-translational modification 2-(S-cysteinyl)pyruvic acid O-phosphothioketal. UDP-N-acetyl-alpha-D-glucosamine is bound by residues 129–133 (RPIDQ), 170–172 (TVT), aspartate 311, and isoleucine 333.

It belongs to the EPSP synthase family. MurA subfamily.

It is found in the cytoplasm. The enzyme catalyses phosphoenolpyruvate + UDP-N-acetyl-alpha-D-glucosamine = UDP-N-acetyl-3-O-(1-carboxyvinyl)-alpha-D-glucosamine + phosphate. It functions in the pathway cell wall biogenesis; peptidoglycan biosynthesis. Cell wall formation. Adds enolpyruvyl to UDP-N-acetylglucosamine. The sequence is that of UDP-N-acetylglucosamine 1-carboxyvinyltransferase from Aquifex aeolicus (strain VF5).